A 345-amino-acid chain; its full sequence is tRNA N6-adenosine threonylcarbamoyltransferase (345 aa).

Residues H111 and H115 each contribute to the Fe cation site. Residues 134–138 (LVSGG), D167, G180, and N276 contribute to the substrate site. D304 provides a ligand contact to Fe cation.

The protein belongs to the KAE1 / TsaD family. It depends on Fe(2+) as a cofactor.

The protein localises to the cytoplasm. The enzyme catalyses L-threonylcarbamoyladenylate + adenosine(37) in tRNA = N(6)-L-threonylcarbamoyladenosine(37) in tRNA + AMP + H(+). In terms of biological role, required for the formation of a threonylcarbamoyl group on adenosine at position 37 (t(6)A37) in tRNAs that read codons beginning with adenine. Is involved in the transfer of the threonylcarbamoyl moiety of threonylcarbamoyl-AMP (TC-AMP) to the N6 group of A37, together with TsaE and TsaB. TsaD likely plays a direct catalytic role in this reaction. The sequence is that of tRNA N6-adenosine threonylcarbamoyltransferase from Alcanivorax borkumensis (strain ATCC 700651 / DSM 11573 / NCIMB 13689 / SK2).